Consider the following 599-residue polypeptide: MENIIEINYNQTGKSKKTNEYGMREMQARAFEKRNSQYLLVKAPPASGKSRALMFIGLDKLINQGLRKVIVAVPERSIGSSFKNTDLKSYGFFENWKVDPRNNLTVGGDNSKVKSFVRFMESDDQVLICTHSTLRFAFEKIDDKAFDNCLLAIDEFHHVSADVNSRLGELLRSIIHNSSAHIVAMTGSYFRGDSVPILLPEDEELFDKVTYSYYEQLDGYEYLKGFGIGYHFYQGQYTSAINEVLDTNKKTIVHIPNVNSGESTKDKYDEVGKILDMIGEVEYQDDDTGIIYVKRHSDGKTLKIADLVDDQVGRENVVAYLRNIEALDDLDIIIALGMAKEGFDWPFCEHTLTVGYRGSLTEIVQIIGRCTRDSYNKTYAQFTNLIAMPDAKDEVVTYTVNTMLKAISASLLMEQVLTPDFKFKRRRNESEKSSTTGELFVKGLKEPSTENVKKIIENDINDLKAKIMQDSQVQKTFSGEVDPKVLNKVLIPKVIQKVYPNLSDEEIEEVRQHVVLDTVMKGAKSEVVGSKEFIRMADKFINIEDLDINLIDSINPFQKAFEVLSKELNSPVLKLIQETIDAKRINFDEDELVFIWPKV.

Positions 30-207 (AFEKRNSQYL…LLPEDEELFD (178 aa)) constitute a Helicase ATP-binding domain. 43 to 50 (APPASGKS) is an ATP binding site. The DEAH box motif lies at 154–157 (DEFH). One can recognise a Helicase C-terminal domain in the interval 236-408 (QYTSAINEVL…TVNTMLKAIS (173 aa)).

It belongs to the helicase family.

This is Putative ATP-dependent helicase YeeB (yeeB) from Bacillus subtilis (strain 168).